Reading from the N-terminus, the 433-residue chain is Enolase (433 aa).

Gln167 contributes to the (2R)-2-phosphoglycerate binding site. The active-site Proton donor is Glu209. Mg(2+)-binding residues include Asp246, Glu291, and Asp318. Positions 343, 372, 373, and 394 each coordinate (2R)-2-phosphoglycerate. Lys343 functions as the Proton acceptor in the catalytic mechanism.

It belongs to the enolase family. As to quaternary structure, component of the RNA degradosome, a multiprotein complex involved in RNA processing and mRNA degradation. Mg(2+) serves as cofactor.

The protein resides in the cytoplasm. Its subcellular location is the secreted. It localises to the cell surface. It catalyses the reaction (2R)-2-phosphoglycerate = phosphoenolpyruvate + H2O. Its pathway is carbohydrate degradation; glycolysis; pyruvate from D-glyceraldehyde 3-phosphate: step 4/5. Catalyzes the reversible conversion of 2-phosphoglycerate (2-PG) into phosphoenolpyruvate (PEP). It is essential for the degradation of carbohydrates via glycolysis. The protein is Enolase of Sodalis glossinidius (strain morsitans).